The primary structure comprises 108 residues: uncharacterized protein (108 aa).

3 consecutive transmembrane segments (helical) span residues 10–32 (SLCY…FVVN), 45–67 (ISHI…GAVA), and 77–99 (FVII…WNVI).

Its subcellular location is the cell membrane. This is an uncharacterized protein from Bacillus subtilis (strain 168).